The sequence spans 419 residues: UDP-N-acetylglucosamine 1-carboxyvinyltransferase (419 aa).

22 to 23 (KN) serves as a coordination point for phosphoenolpyruvate. R91 is a UDP-N-acetyl-alpha-D-glucosamine binding site. Catalysis depends on C115, which acts as the Proton donor. Position 115 is a 2-(S-cysteinyl)pyruvic acid O-phosphothioketal (C115). UDP-N-acetyl-alpha-D-glucosamine-binding positions include 120-124 (RPVDL), 160-163 (KVSV), D305, and V327.

This sequence belongs to the EPSP synthase family. MurA subfamily.

Its subcellular location is the cytoplasm. It carries out the reaction phosphoenolpyruvate + UDP-N-acetyl-alpha-D-glucosamine = UDP-N-acetyl-3-O-(1-carboxyvinyl)-alpha-D-glucosamine + phosphate. The protein operates within cell wall biogenesis; peptidoglycan biosynthesis. Its function is as follows. Cell wall formation. Adds enolpyruvyl to UDP-N-acetylglucosamine. The chain is UDP-N-acetylglucosamine 1-carboxyvinyltransferase from Salmonella dublin (strain CT_02021853).